We begin with the raw amino-acid sequence, 442 residues long: Gamma-glutamyl phosphate reductase (442 aa).

The protein belongs to the gamma-glutamyl phosphate reductase family.

Its subcellular location is the cytoplasm. It catalyses the reaction L-glutamate 5-semialdehyde + phosphate + NADP(+) = L-glutamyl 5-phosphate + NADPH + H(+). It participates in amino-acid biosynthesis; L-proline biosynthesis; L-glutamate 5-semialdehyde from L-glutamate: step 2/2. Catalyzes the NADPH-dependent reduction of L-glutamate 5-phosphate into L-glutamate 5-semialdehyde and phosphate. The product spontaneously undergoes cyclization to form 1-pyrroline-5-carboxylate. The sequence is that of Gamma-glutamyl phosphate reductase from Campylobacter curvus (strain 525.92).